The following is a 169-amino-acid chain: Protein FAM106A (169 aa).

The protein belongs to the FAM106 family.

This is Protein FAM106A (FAM106A) from Homo sapiens (Human).